The following is a 308-amino-acid chain: MQEIESLHQSVLLQEVLQAFAPLEEGVLIDCTLGLGGHSKALLSQKPHLKLIGIDKDKFAQEIAKERLKAFEGRYNLLSGGFAKRFKEALEMHGERIKGVLVDLGVSSLQLDDDNRGFNFHSHALDMRMDLESDLNAQKVINSYSVVALEKIFRDYGEIKEYKKIAHKIAERRAKKPFKDAKDLSDFLSSFSKNKKIHPATLVFQAVRIEVNSELEELKEFLQCARNLKGAILCVISFHSLEDALVKNAFKDYAKNCICDPSSFKCTCSNNHALGTILTKKPIIPSPEEIKNNRRSRSAKMRVFQFKP.

Residues 36-38 (GGH), Asp55, Phe86, Asp103, and Gln110 each bind S-adenosyl-L-methionine.

The protein belongs to the methyltransferase superfamily. RsmH family.

It is found in the cytoplasm. The enzyme catalyses cytidine(1402) in 16S rRNA + S-adenosyl-L-methionine = N(4)-methylcytidine(1402) in 16S rRNA + S-adenosyl-L-homocysteine + H(+). Its function is as follows. Specifically methylates the N4 position of cytidine in position 1402 (C1402) of 16S rRNA. This chain is Ribosomal RNA small subunit methyltransferase H, found in Helicobacter pylori (strain P12).